Consider the following 199-residue polypeptide: Inner membrane-spanning protein YciB (199 aa).

The next 6 membrane-spanning stretches (helical) occupy residues 7–27, 32–52, 56–76, 93–113, 126–146, and 153–173; these read HPLF…AANA, FVAT…SYVV, IPLM…LTLV, LFAG…AIMF, VLTL…ELIW, and FWVN…AMMQ.

It belongs to the YciB family.

It localises to the cell inner membrane. Functionally, plays a role in cell envelope biogenesis, maintenance of cell envelope integrity and membrane homeostasis. The sequence is that of Inner membrane-spanning protein YciB from Nitrobacter hamburgensis (strain DSM 10229 / NCIMB 13809 / X14).